The chain runs to 205 residues: FMN-dependent NADH:quinone oxidoreductase (205 aa).

Residues serine 10 and 16–18 (SVS) each bind FMN.

Belongs to the azoreductase type 1 family. As to quaternary structure, homodimer. FMN is required as a cofactor.

It catalyses the reaction 2 a quinone + NADH + H(+) = 2 a 1,4-benzosemiquinone + NAD(+). The enzyme catalyses N,N-dimethyl-1,4-phenylenediamine + anthranilate + 2 NAD(+) = 2-(4-dimethylaminophenyl)diazenylbenzoate + 2 NADH + 2 H(+). Functionally, quinone reductase that provides resistance to thiol-specific stress caused by electrophilic quinones. Its function is as follows. Also exhibits azoreductase activity. Catalyzes the reductive cleavage of the azo bond in aromatic azo compounds to the corresponding amines. The chain is FMN-dependent NADH:quinone oxidoreductase from Agrobacterium fabrum (strain C58 / ATCC 33970) (Agrobacterium tumefaciens (strain C58)).